Here is a 589-residue protein sequence, read N- to C-terminus: Proline--tRNA ligase (589 aa).

The protein belongs to the class-II aminoacyl-tRNA synthetase family. ProS type 1 subfamily. Homodimer.

The protein localises to the cytoplasm. It catalyses the reaction tRNA(Pro) + L-proline + ATP = L-prolyl-tRNA(Pro) + AMP + diphosphate. In terms of biological role, catalyzes the attachment of proline to tRNA(Pro) in a two-step reaction: proline is first activated by ATP to form Pro-AMP and then transferred to the acceptor end of tRNA(Pro). As ProRS can inadvertently accommodate and process non-cognate amino acids such as alanine and cysteine, to avoid such errors it has two additional distinct editing activities against alanine. One activity is designated as 'pretransfer' editing and involves the tRNA(Pro)-independent hydrolysis of activated Ala-AMP. The other activity is designated 'posttransfer' editing and involves deacylation of mischarged Ala-tRNA(Pro). The misacylated Cys-tRNA(Pro) is not edited by ProRS. The sequence is that of Proline--tRNA ligase from Gloeobacter violaceus (strain ATCC 29082 / PCC 7421).